The primary structure comprises 180 residues: Uterocalin (180 aa).

Residues 1-18 form the signal peptide; it reads MNLLLLAMGLILPRRPHA. Cys82 and Cys175 are joined by a disulfide. Asn101 is a glycosylation site (N-linked (GlcNAc...) asparagine).

It belongs to the calycin superfamily. Lipocalin family. In terms of tissue distribution, expressed in glandular and lumenal epithelia of the endometrium. Is transferred to the embryonic capsule, the conceptus and the yolk sac.

Its subcellular location is the secreted. Functionally, binds fatty acids and retinol. Is specialized for the preattachment embryo. May be important to maintain the pregnancy and may transport small hydrophobic ligands from mother to the developing embryo. In Equus caballus (Horse), this protein is Uterocalin.